The chain runs to 126 residues: Large ribosomal subunit protein bL12c (126 aa).

The protein belongs to the bacterial ribosomal protein bL12 family. In terms of assembly, homodimer. Part of the ribosomal stalk of the 50S ribosomal subunit. Forms a multimeric L10(L12)X complex, where L10 forms an elongated spine to which 2 to 4 L12 dimers bind in a sequential fashion. Binds GTP-bound translation factors.

Its subcellular location is the plastid. It localises to the cyanelle. In terms of biological role, forms part of the ribosomal stalk which helps the ribosome interact with GTP-bound translation factors. Is thus essential for accurate translation. This Cyanophora paradoxa protein is Large ribosomal subunit protein bL12c.